Reading from the N-terminus, the 172-residue chain is Large ribosomal subunit protein uL10 (172 aa).

The protein belongs to the universal ribosomal protein uL10 family. In terms of assembly, part of the ribosomal stalk of the 50S ribosomal subunit. The N-terminus interacts with L11 and the large rRNA to form the base of the stalk. The C-terminus forms an elongated spine to which L12 dimers bind in a sequential fashion forming a multimeric L10(L12)X complex.

Functionally, forms part of the ribosomal stalk, playing a central role in the interaction of the ribosome with GTP-bound translation factors. The protein is Large ribosomal subunit protein uL10 of Ruegeria pomeroyi (strain ATCC 700808 / DSM 15171 / DSS-3) (Silicibacter pomeroyi).